The sequence spans 205 residues: Superoxide dismutase [Fe] (205 aa).

Histidine 33, histidine 81, aspartate 167, and histidine 171 together coordinate Fe cation.

The protein belongs to the iron/manganese superoxide dismutase family. Homotetramer. Fe cation is required as a cofactor.

The catalysed reaction is 2 superoxide + 2 H(+) = H2O2 + O2. Its function is as follows. Destroys superoxide anion radicals which are normally produced within the cells and which are toxic to biological systems. This Methanothermobacter thermautotrophicus (strain ATCC 29096 / DSM 1053 / JCM 10044 / NBRC 100330 / Delta H) (Methanobacterium thermoautotrophicum) protein is Superoxide dismutase [Fe] (sod).